The primary structure comprises 244 residues: tRNA (guanine-N(1)-)-methyltransferase (244 aa).

S-adenosyl-L-methionine-binding positions include glycine 113 and 133-138 (IGDYVL).

Belongs to the RNA methyltransferase TrmD family. As to quaternary structure, homodimer.

Its subcellular location is the cytoplasm. It catalyses the reaction guanosine(37) in tRNA + S-adenosyl-L-methionine = N(1)-methylguanosine(37) in tRNA + S-adenosyl-L-homocysteine + H(+). In terms of biological role, specifically methylates guanosine-37 in various tRNAs. This Bacillus cereus (strain G9842) protein is tRNA (guanine-N(1)-)-methyltransferase.